We begin with the raw amino-acid sequence, 801 residues long: Phenylalanine--tRNA ligase beta subunit (801 aa).

In terms of domain architecture, tRNA-binding spans Ala-39–Phe-153. The B5 domain occupies Thr-406 to Thr-481. 4 residues coordinate Mg(2+): Asp-459, Asp-465, Glu-468, and Glu-469. The 94-residue stretch at Thr-708–Arg-801 folds into the FDX-ACB domain.

This sequence belongs to the phenylalanyl-tRNA synthetase beta subunit family. Type 1 subfamily. In terms of assembly, tetramer of two alpha and two beta subunits. Mg(2+) is required as a cofactor.

The protein localises to the cytoplasm. The enzyme catalyses tRNA(Phe) + L-phenylalanine + ATP = L-phenylalanyl-tRNA(Phe) + AMP + diphosphate + H(+). The sequence is that of Phenylalanine--tRNA ligase beta subunit from Streptococcus agalactiae serotype Ia (strain ATCC 27591 / A909 / CDC SS700).